A 420-amino-acid chain; its full sequence is Serine hydroxymethyltransferase (420 aa).

(6S)-5,6,7,8-tetrahydrofolate is bound by residues leucine 121 and 125–127 (GHL). At lysine 230 the chain carries N6-(pyridoxal phosphate)lysine. (6S)-5,6,7,8-tetrahydrofolate-binding positions include glutamate 246 and 354–356 (SPF).

Belongs to the SHMT family. As to quaternary structure, homodimer. Pyridoxal 5'-phosphate serves as cofactor.

The protein localises to the cytoplasm. The enzyme catalyses (6R)-5,10-methylene-5,6,7,8-tetrahydrofolate + glycine + H2O = (6S)-5,6,7,8-tetrahydrofolate + L-serine. Its pathway is one-carbon metabolism; tetrahydrofolate interconversion. It functions in the pathway amino-acid biosynthesis; glycine biosynthesis; glycine from L-serine: step 1/1. Functionally, catalyzes the reversible interconversion of serine and glycine with tetrahydrofolate (THF) serving as the one-carbon carrier. This reaction serves as the major source of one-carbon groups required for the biosynthesis of purines, thymidylate, methionine, and other important biomolecules. Also exhibits THF-independent aldolase activity toward beta-hydroxyamino acids, producing glycine and aldehydes, via a retro-aldol mechanism. In Rickettsia akari (strain Hartford), this protein is Serine hydroxymethyltransferase.